We begin with the raw amino-acid sequence, 363 residues long: Homeobox protein DTH-2 (363 aa).

Positions 133 to 192 form a DNA-binding region, homeobox; it reads RRKRRILFSQAQIYELERRFKQQKYLSAPEREHLANLINLTPTQVKIWFQNHRYKCKRSQ. Positions 189–246 are disordered; it reads KRSQKDKEKEQQKEKSYHLKKNIVDDKERSPNKQICNASSSDRSTPEEPVAKAKESGL. The segment covering 191–219 has biased composition (basic and acidic residues); that stretch reads SQKDKEKEQQKEKSYHLKKNIVDDKERSP. The segment covering 220-231 has biased composition (polar residues); it reads NKQICNASSSDR. The segment covering 232-246 has biased composition (basic and acidic residues); sequence STPEEPVAKAKESGL.

The protein belongs to the NK-2 homeobox family. In terms of tissue distribution, intestine and unidentified peripheral parenchymal cells. Slightly higher levels in the cephalic region compared to other body regions.

The protein resides in the nucleus. Its function is as follows. This protein might be involved in determination and/or differentiation of nerve cells in the continuous replacement of neurons in the cephalic region. This Girardia tigrina (Planarian) protein is Homeobox protein DTH-2 (DTH-2).